The following is a 221-amino-acid chain: Histone H1.3 (221 aa).

A compositionally biased stretch (low complexity) spans 1–17 (MSETAPLAPTIPAPAEK). The interval 1-43 (MSETAPLAPTIPAPAEKTPVKKKAKKAGATAGKRKASGPPVSE) is disordered. N-acetylserine is present on serine 2. Serine 2 carries the post-translational modification Phosphoserine. Lysine 17 is modified (N6-acetyllysine). Threonine 18 carries the post-translational modification Phosphothreonine. Basic residues predominate over residues 20–36 (VKKKAKKAGATAGKRKA). N6-(beta-hydroxybutyryl)lysine occurs at positions 35, 47, and 53. One can recognise an H15 domain in the interval 37–110 (SGPPVSELIT…GASGSFKLNK (74 aa)). Residue arginine 55 is modified to Citrulline. Lysine 65, lysine 76, lysine 86, and lysine 91 each carry N6-(beta-hydroxybutyryl)lysine. Positions 90–221 (SKGTLVQTKG…KAKKAAPKKK (132 aa)) are disordered. A Phosphoserine; by PKC modification is found at serine 105. Lysine 107 carries the N6-(beta-hydroxybutyryl)lysine modification. Composition is skewed to basic residues over residues 120–141 (KAKKAGAAKPRKPAGAAKKPKK), 150–161 (KSIKKTPKKVKK), and 170–179 (KVAKSAKKVK). Lysine 170 carries the N6-(beta-hydroxybutyryl)lysine modification. A compositionally biased stretch (low complexity) spans 180–193 (TPQPKKAAKSPAKA). The segment covering 194–221 (KAPKPKAAKPKSGKPKVTKAKKAAPKKK) has biased composition (basic residues).

Belongs to the histone H1/H5 family. Post-translationally, H1 histones are progressively phosphorylated during the cell cycle, becoming maximally phosphorylated during late G2 phase and M phase, and being dephosphorylated sharply thereafter. Citrullination at Arg-55 (H1R54ci) by PADI4 takes place within the DNA-binding site of H1 and results in its displacement from chromatin and global chromatin decondensation, thereby promoting pluripotency and stem cell maintenance.

It localises to the nucleus. The protein resides in the chromosome. Its function is as follows. Histone H1 protein binds to linker DNA between nucleosomes forming the macromolecular structure known as the chromatin fiber. Histones H1 are necessary for the condensation of nucleosome chains into higher-order structured fibers. Also acts as a regulator of individual gene transcription through chromatin remodeling, nucleosome spacing and DNA methylation. This is Histone H1.3 from Homo sapiens (Human).